The primary structure comprises 133 residues: Exosome complex protein C1739.07 (133 aa).

Residues 96-133 (VNPKTEAVNTSNAAISSSSSNRPKVAKDAATRIIKHHT) are disordered. Positions 102–116 (AVNTSNAAISSSSSN) are enriched in low complexity.

The protein belongs to the C1D family. Component of the exosome multienzyme ribonuclease complex. Interacts with cut3.

Its subcellular location is the cytoplasm. It localises to the nucleus. Required for exosome-dependent processing of pre-rRNA and small nucleolar RNA (snRNA) precursors. Involved in processing of 35S pre-rRNA at the A0, A1 and A2 sites. This Schizosaccharomyces pombe (strain 972 / ATCC 24843) (Fission yeast) protein is Exosome complex protein C1739.07.